We begin with the raw amino-acid sequence, 609 residues long: UvrABC system protein C (609 aa).

The GIY-YIG domain occupies 13-91 (HEPGVYRMYD…IKLYQPRYNV (79 aa)). The region spanning 201 to 236 (QQVLDYLIGKMEQASRNLDFEQAARYRDQIQAVRSV) is the UVR domain.

This sequence belongs to the UvrC family. Interacts with UvrB in an incision complex.

It is found in the cytoplasm. Its function is as follows. The UvrABC repair system catalyzes the recognition and processing of DNA lesions. UvrC both incises the 5' and 3' sides of the lesion. The N-terminal half is responsible for the 3' incision and the C-terminal half is responsible for the 5' incision. The sequence is that of UvrABC system protein C from Haemophilus influenzae (strain ATCC 51907 / DSM 11121 / KW20 / Rd).